We begin with the raw amino-acid sequence, 642 residues long: Bifunctional protein glk (642 aa).

Positions 1 to 340 (MSTGAQSKAV…QLSNRSGGAS (340 aa)) are glucokinase. ATP is bound at residue 23 to 28 (ADVGGT). The HTH rpiR-type domain occupies 341–417 (SAVFERIRQM…LKLATGLTGT (77 aa)). The interval 341-642 (SAVFERIRQM…SPAAKDVARD (302 aa)) is putative HTH-type transcriptional regulator. The segment at residues 377–396 (IVDIARKADVSQPTVIRFCR) is a DNA-binding region (H-T-H motif). The 140-residue stretch at 461-600 (AIEILNGARR…AVGVAIRRAS (140 aa)) folds into the SIS domain. Residues 576 to 596 (SMISRILHLLMIDILAVGVAI) form a helical membrane-spanning segment.

The protein in the N-terminal section; belongs to the bacterial glucokinase family.

The protein resides in the membrane. The catalysed reaction is D-glucose + ATP = D-glucose 6-phosphate + ADP + H(+). The sequence is that of Bifunctional protein glk (glk) from Burkholderia orbicola (strain AU 1054).